Here is a 425-residue protein sequence, read N- to C-terminus: Alpha/beta hydrolase xenA (425 aa).

Residue aspartate 366 is part of the active site.

This sequence belongs to the AB hydrolase superfamily. FUS2 hydrolase family. As to quaternary structure, homodimer.

Its pathway is mycotoxin biosynthesis. Its function is as follows. Alpha/beta hydrolase; part of the gene cluster that mediates the biosynthesis of xenoacremones such as xenoacremone A, a compound that shows inhibitory activity toward the PI3K/AKT signaling pathway and which has the ability to induce apoptosis of A549 lung cancer cells. Within the pathway, cooperation of the hybrid PKS-NRPS xenE and the trans-acting enoyl reductase xenG is responsible for the formation of the reduced tyrosine-nonaketide derivative. The alpha/beta hydrolase xenA then accelerates intramolecular nucleophilic attack to give a pyrrolidone derivative. Subsequently, three enzymes, xenF, xenD, and xenC, coordinately participate in the conversion to xenoacremone B. XenF catalyzes sigmatropic rearrangement to form an A-ring, which leads to an unusual intermediate with a hexane ring, which is required for the formation of the tricarbocyclic product. Epoxidation catalyzed by xenD and the formation of the paracyclophane ether catalyzed by xenC initiate a spontaneous intramolecular Diels-Alder (IMDA) reaction to yield xenoacremone B. Spontaneous hydration of xenoacremone B leads to the formation of xenoacremone A, which undergoes subsequent methylation to afford xenoacremone C. This is Alpha/beta hydrolase xenA from Xenoacremonium sinensis (Endophyte fungus).